Consider the following 142-residue polypeptide: AVCVSLLGAANIPPQPLTFLQFNEMIECTIPGSFPLLDNMDCGCYCGTGGRGTPVDMLDRCCKEHDDCYAQIKENLKCSSLLNVPYVKQYSFTCSEGDLTCSDAAGTCARIVCDCDRTAALCFAEAPYKRRNFKIDYKTRCQ.

The N-terminal stretch at A1 to A9 is a signal peptide. Residues A10 to L17 constitute a propeptide that is removed on maturation. 7 cysteine pairs are disulfide-bonded: C28/C94, C44/C141, C46/C62, C61/C122, C68/C115, C78/C108, and C101/C113. Positions 45, 47, and 49 each coordinate Ca(2+). H65 is an active-site residue. D66 provides a ligand contact to Ca(2+). The active site involves D116.

This sequence belongs to the phospholipase A2 family. Group I subfamily. D49 sub-subfamily. The cofactor is Ca(2+). In terms of tissue distribution, expressed by the venom gland.

It is found in the secreted. The enzyme catalyses a 1,2-diacyl-sn-glycero-3-phosphocholine + H2O = a 1-acyl-sn-glycero-3-phosphocholine + a fatty acid + H(+). In terms of biological role, PLA2 catalyzes the calcium-dependent hydrolysis of the 2-acyl groups in 3-sn-phosphoglycerides. In Bungarus candidus (Malayan krait), this protein is Acidic phospholipase A2 Bc-PL.